A 91-amino-acid polypeptide reads, in one-letter code: Sec-independent protein translocase protein TatA (91 aa).

A helical membrane pass occupies residues 1-21 (MGAMSPWHWAIVALVVIILFG). The segment at 44–91 (KEMQNDNSTPAPTAQQSAPAELPVADTTTAPVTPPAPVQPQHTEPKSA) is disordered. The segment covering 51-74 (STPAPTAQQSAPAELPVADTTTAP) has biased composition (low complexity).

The protein belongs to the TatA/E family. The Tat system comprises two distinct complexes: a TatABC complex, containing multiple copies of TatA, TatB and TatC subunits, and a separate TatA complex, containing only TatA subunits. Substrates initially bind to the TatABC complex, which probably triggers association of the separate TatA complex to form the active translocon.

It localises to the cell membrane. Part of the twin-arginine translocation (Tat) system that transports large folded proteins containing a characteristic twin-arginine motif in their signal peptide across membranes. TatA could form the protein-conducting channel of the Tat system. The polypeptide is Sec-independent protein translocase protein TatA (Rhodococcus jostii (strain RHA1)).